Here is a 224-residue protein sequence, read N- to C-terminus: Deoxyribose-phosphate aldolase (224 aa).

The active-site Proton donor/acceptor is the aspartate 94. The Schiff-base intermediate with acetaldehyde role is filled by lysine 156. The active-site Proton donor/acceptor is lysine 184.

Belongs to the DeoC/FbaB aldolase family. DeoC type 1 subfamily.

It localises to the cytoplasm. It carries out the reaction 2-deoxy-D-ribose 5-phosphate = D-glyceraldehyde 3-phosphate + acetaldehyde. It participates in carbohydrate degradation; 2-deoxy-D-ribose 1-phosphate degradation; D-glyceraldehyde 3-phosphate and acetaldehyde from 2-deoxy-alpha-D-ribose 1-phosphate: step 2/2. In terms of biological role, catalyzes a reversible aldol reaction between acetaldehyde and D-glyceraldehyde 3-phosphate to generate 2-deoxy-D-ribose 5-phosphate. The protein is Deoxyribose-phosphate aldolase of Methanocella arvoryzae (strain DSM 22066 / NBRC 105507 / MRE50).